The primary structure comprises 562 residues: Arginine--tRNA ligase (562 aa).

The short motif at 129 to 139 (ANPTGPLHVGH) is the 'HIGH' region element.

The protein belongs to the class-I aminoacyl-tRNA synthetase family. As to quaternary structure, monomer.

The protein localises to the cytoplasm. It carries out the reaction tRNA(Arg) + L-arginine + ATP = L-arginyl-tRNA(Arg) + AMP + diphosphate. This is Arginine--tRNA ligase from Xylella fastidiosa (strain M12).